The chain runs to 753 residues: Dolichyl-phosphate-mannose--protein mannosyltransferase 3 (753 aa).

Topologically, residues 1–50 are cytoplasmic; sequence MPYRVATGYSEKSTDDDLIWRTPIVKEELEDADNFLKDDAELYDKVKNES. The helical transmembrane segment at 51–71 threads the bilayer; the sequence is AVSHLDTIVMPIIFTVLGMFT. Over 72-148 the chain is Lumenal; that stretch reads RMYKIGRNNH…IDYVKMRLFQ (77 aa). Asn-124 carries an N-linked (GlcNAc...) asparagine glycan. A helical membrane pass occupies residues 149–169; it reads AMFSSLCVPLAYFTGRAIGFS. Residues 170 to 174 lie on the Cytoplasmic side of the membrane; it reads RLSVW. A helical membrane pass occupies residues 175-195; sequence LFTILVIFENSYATLGKFILL. Residues 196 to 235 are Lumenal-facing; the sequence is DSMLLFFTVSSYFCLAKFHTMRKSPFSARWWLWLCLTGLN. The chain crosses the membrane as a helical span at residues 236–256; sequence LGCAISVKMVGLFIISVVGIY. Residues 257-282 lie on the Cytoplasmic side of the membrane; that stretch reads TISELWNLLSDRSVSWKVYVNHWLAR. Residues 283–303 traverse the membrane as a helical segment; that stretch reads IFGLIIIPVCVFLLCFKIHFD. Topologically, residues 304-602 are lumenal; that stretch reads LLSNSGPGDS…IKYFLLGSPA (299 aa). An N-linked (GlcNAc...) asparagine glycan is attached at Asn-324. One can recognise an MIR 1 domain in the interval 332–387; that stretch reads PRDVALGSSIISIKNQALGGALLHSHVQPFPEGSEQQQVTVYGYSDANNEWFFQRI. Asn-398 carries an N-linked (GlcNAc...) asparagine glycan. 2 MIR domains span residues 401-457 and 465-523; these read IEFV…IEIV and PTLL…IETH. The helical transmembrane segment at 603-623 threads the bilayer; sequence SVWPSSIAVCALIIHVIFLTL. Residues 624–639 are Cytoplasmic-facing; that stretch reads KWQRQCVILSDPVERD. Residues 640-660 form a helical membrane-spanning segment; sequence VFVMAAFYPLLAWLLHYMPFV. Residues 661 to 665 are Lumenal-facing; the sequence is VMSRV. Residues 666-686 form a helical membrane-spanning segment; it reads VYAHHYLPTLYFALMILSYYF. At 687-703 the chain is on the cytoplasmic side; sequence DMITKRWATRNTGKFLR. A helical transmembrane segment spans residues 704–724; that stretch reads LGAYIVYGSIVIAGFFYFSPF. The Lumenal portion of the chain corresponds to 725–753; the sequence is SFGMDGPVDDYAYLAWLPTWQIVEDIRNT.

Belongs to the glycosyltransferase 39 family. As to quaternary structure, PMT3 and PMT5 form a functional heterodimer. Also forms a minor complex with PMT1.

Its subcellular location is the endoplasmic reticulum membrane. The enzyme catalyses a di-trans,poly-cis-dolichyl beta-D-mannosyl phosphate + L-seryl-[protein] = 3-O-(alpha-D-mannosyl)-L-seryl-[protein] + a di-trans,poly-cis-dolichyl phosphate + H(+). It carries out the reaction a di-trans,poly-cis-dolichyl beta-D-mannosyl phosphate + L-threonyl-[protein] = 3-O-(alpha-D-mannosyl)-L-threonyl-[protein] + a di-trans,poly-cis-dolichyl phosphate + H(+). It functions in the pathway protein modification; protein glycosylation. In terms of biological role, protein O-mannosyltransferase involved in O-glycosylation which is essential for cell wall rigidity. Forms a heterodimeric complex with PMT5 and more rarely with PMT1 to transfer mannose from Dol-P-mannose to Ser or Thr residues on proteins. Seems to have redundant activity to PMT2. This chain is Dolichyl-phosphate-mannose--protein mannosyltransferase 3, found in Saccharomyces cerevisiae (strain ATCC 204508 / S288c) (Baker's yeast).